The primary structure comprises 259 residues: Insulin-induced gene 1 protein (259 aa).

The Cytoplasmic segment spans residues 1–66 (MPRLHDHVWN…ARPGSWHHDL (66 aa)). The interval 36-55 (PGVPEPEHAPRGQRAGTTGC) is disordered. The chain crosses the membrane as a helical span at residues 67–89 (VQRSLVLFSFGVVLALVLNLLQI). Residues 90–108 (QRNVTLFPDEVIATIFSSA) are Extracellular-facing. Residues 109-126 (WWVPPCCGTAAAVVGLLY) traverse the membrane as a helical segment. At 127–141 (PCIDSHLGEPHKFKR) the chain is on the cytoplasmic side. Glycyl lysine isopeptide (Lys-Gly) (interchain with G-Cter in ubiquitin) cross-links involve residues lysine 138 and lysine 140. A helical membrane pass occupies residues 142–164 (EWASVMRCIAVFVGINHASAKLD). The Extracellular segment spans residues 165–167 (FAN). Residues 168–186 (NVQLSLTLAALSLGLWWTF) form a helical membrane-spanning segment. The Cytoplasmic segment spans residues 187-191 (DRSRS). A Phosphoserine modification is found at serine 189. The helical transmembrane segment at 192-213 (GLGLGITIAFLATLITQFLVYN) threads the bilayer. At 214 to 227 (GVYQYTSPDFLYIR) the chain is on the extracellular side. Residues 228–245 (SWLPCIFFSGGVTVGNIG) traverse the membrane as a helical segment. The Cytoplasmic segment spans residues 246-259 (RQLAMGVPEKPHSD). Positions 253–259 (PEKPHSD) match the KxHxx motif.

The protein belongs to the INSIG family. Interacts with SCAP; interaction is direct and only takes place in the presence of sterols; it prevents interaction between SCAP and the coat protein complex II (COPII). Associates with the SCAP-SREBP complex (composed of SCAP and SREBF1/SREBP1 or SREBF2/SREBP2); association is mediated via its interaction with SCAP and only takes place in the presence of sterols. Interaction with SCAP is mutually exclusive with PAQR3. Interacts with HMGCR (via its SSD); the interaction, accelerated by sterols, leads to the recruitment of HMGCR to AMFR/gp78 for its ubiquitination by the sterol-mediated ERAD pathway. Interacts with AMFR/gp78 (via its membrane domain); the interaction recruits HMCR at the ER membrane for its ubiquitination and degradation by the sterol-mediated ERAD pathway. Interacts with SOAT2/ACAT2; leading to promote recruitment of AMFR/gp78 and subsequent ubiquitination of SOAT2/ACAT2. Interacts with RNF139. Interacts with RNF145. In terms of processing, phosphorylation at Ser-189 by PCK1 reduces binding to oxysterol, disrupting the interaction between INSIG1 and SCAP, thereby promoting nuclear translocation of SREBP proteins (SREBF1/SREBP1 or SREBF2/SREBP2) and subsequent transcription of downstream lipogenesis-related genes. Ubiquitinated by AMFR/gp78 in response to sterol deprivation, leading to its degradation: when the SCAP-SREBP complex becomes dissociated from INSIG1, INSIG1 is then ubiquitinated and degraded in proteasomes. Although ubiquitination is required for rapid INSIG1 degradation, it is not required for release of the SCAP-SREBP complex. Ubiquitinated by RNF139.

It is found in the endoplasmic reticulum membrane. Oxysterol-binding protein that mediates feedback control of cholesterol synthesis by controlling both endoplasmic reticulum to Golgi transport of SCAP and degradation of HMGCR. Acts as a negative regulator of cholesterol biosynthesis by mediating the retention of the SCAP-SREBP complex in the endoplasmic reticulum, thereby blocking the processing of sterol regulatory element-binding proteins (SREBPs) SREBF1/SREBP1 and SREBF2/SREBP2. Binds oxysterol, including 25-hydroxycholesterol, regulating interaction with SCAP and retention of the SCAP-SREBP complex in the endoplasmic reticulum. In presence of oxysterol, interacts with SCAP, retaining the SCAP-SREBP complex in the endoplasmic reticulum, thereby preventing SCAP from escorting SREBF1/SREBP1 and SREBF2/SREBP2 to the Golgi. Sterol deprivation or phosphorylation by PCK1 reduce oxysterol-binding, disrupting the interaction between INSIG1 and SCAP, thereby promoting Golgi transport of the SCAP-SREBP complex, followed by processing and nuclear translocation of SREBF1/SREBP1 and SREBF2/SREBP2. Also regulates cholesterol synthesis by regulating degradation of HMGCR: initiates the sterol-mediated ubiquitin-mediated endoplasmic reticulum-associated degradation (ERAD) of HMGCR via recruitment of the reductase to the ubiquitin ligases AMFR/gp78 and/or RNF139. Also regulates degradation of SOAT2/ACAT2 when the lipid levels are low: initiates the ubiquitin-mediated degradation of SOAT2/ACAT2 via recruitment of the ubiquitin ligases AMFR/gp78. The protein is Insulin-induced gene 1 protein of Mus musculus (Mouse).